A 162-amino-acid polypeptide reads, in one-letter code: Retinoic acid receptor responder protein 2 (162 aa).

The first 20 residues, 1–20 (MKCLLISLALWLGTVGTRGT), serve as a signal peptide directing secretion. 3 disulfide bridges follow: Cys79-Cys89, Cys100-Cys119, and Cys103-Cys134. A propeptide spanning residues 157–162 (RALRTK) is cleaved from the precursor.

In terms of processing, secreted in an inactive precursor form, prochemerin, which is proteolytically processed by a variety of extracellular proteases to generate forms with differing levels of bioactivity. For example, the removal of six amino acids results in chemerin-156, which exhibits the highest activity, while removal of seven amino acids results in chemerin-155 which has slightly less activity. Some proteases are able to cleave at more than one site and chemerin forms may be sequentially processed by different enzymes to modulate activity levels. The coordinated expression and activity of chemerin-modifying enzymes is essential for regulating its bioactivation, inactivation and, consequently, biological function. Cathepsin G cleaves seven C-terminal amino acids from prochemerin (chemerin-155), elastase is able to cleave six (chemerin-156), eight (chemerin-154) or eleven (chemerin-151), plasmin cleaves five amino acids (chemerin-157), and tryptase cleaves five (chemerin-157) or eight (chemerin-154). Multiple cleavages might be required to fully activate chemerin, with an initial tryptase cleavage resulting in chemerin with low activity (chemerin-157), and a second cleavage by carboxypeptidase N or B producing highly active chemerin (chemerin-156). As to expression, expressed in the differentiated adipocytes (at protein level). Abundantly expressed in the liver, adipose tissue including visceral, epididymal, and brown adipose tissue.

It is found in the secreted. Functionally, adipocyte-secreted protein (adipokine) that regulates adipogenesis, metabolism and inflammation through activation of the chemokine-like receptor 1 (CMKLR1). Also acts as a ligand for CMKLR2. Can also bind to C-C chemokine receptor-like 2 (CCRL2), but with a lower affinity than it does to CMKLR1 or CMKLR2. Positively regulates adipocyte differentiation, modulates the expression of adipocyte genes involved in lipid and glucose metabolism and might play a role in angiogenesis, a process essential for the expansion of white adipose tissue. Also acts as a pro-inflammatory adipokine, causing an increase in secretion of pro-inflammatory and prodiabetic adipokines, which further impair adipose tissue metabolic function and have negative systemic effects including impaired insulin sensitivity, altered glucose and lipid metabolism, and a decrease in vascular function in other tissues. Can have both pro- and anti-inflammatory properties depending on the modality of enzymatic cleavage by different classes of proteases. Acts as a chemotactic factor for leukocyte populations expressing CMKLR1, particularly immature plasmacytoid dendritic cells, but also immature myeloid DCs, macrophages and natural killer cells. Exerts an anti-inflammatory role by preventing TNF/TNFA-induced VCAM1 expression and monocytes adhesion in vascular endothelial cells. The effect is mediated via inhibiting activation of NF-kappa-B and CRK/p38 through stimulation of AKT1/NOS3 signaling and nitric oxide production. Exhibits an antimicrobial function in the skin. In Mus musculus (Mouse), this protein is Retinoic acid receptor responder protein 2 (Rarres2).